A 271-amino-acid polypeptide reads, in one-letter code: Zinc-finger homeodomain protein 8 (271 aa).

At Ser16 the chain carries Phosphoserine. A ZF-HD dimerization-type; degenerate zinc finger spans residues 56-107 (YKECLKNHAAGIGGHALDGCGEFMPSPSFNSNDPASLTCAACGCHRNFHRRE). Positions 125–154 (HNRHQLPPPPPPHLAGIRSPDDDDSASPPP) are disordered. The homeobox DNA-binding region spans 179–242 (RKRFRTKFSQ…NNKISGRSGA (64 aa)).

In terms of assembly, homo- and heterodimer with other ZFHD proteins. Interacts with MIF1, MIF2 and MIF3; these interactions prevent nuclear localization and DNA-binding to inhibit transcription regulation activity. Binds to ZHD1, ZHD2, ZHD4, ZHD10 and ZHD11. Interacts with HIPP30. As to expression, mostly expressed in flowers and inflorescence.

It localises to the nucleus. Its function is as follows. Putative transcription factor. In Arabidopsis thaliana (Mouse-ear cress), this protein is Zinc-finger homeodomain protein 8 (ZHD8).